Reading from the N-terminus, the 188-residue chain is Pro-adrenomedullin (188 aa).

A signal peptide spans M1–T21. R41 bears the Arginine amide mark. Positions E45 to V92 are excised as a propeptide. The segment at R69–R89 is disordered. An intrachain disulfide couples C110 to C115. The segment at D129 to P175 is disordered. Residue Y146 is modified to Tyrosine amide. The propeptide at S153–I188 is preproAM C-terminal fragment.

Belongs to the adrenomedullin family.

The protein localises to the secreted. Functionally, adrenomedullin/ADM and proadrenomedullin N-20 terminal peptide/PAMP are peptide hormones that act as potent hypotensive and vasodilatator agents. Numerous actions have been reported most related to the physiologic control of fluid and electrolyte homeostasis. In terms of biological role, ADM function is mediated by the CALCRL-RAMP2 and CALCRL-RAMP3 receptor complexes with ADM showing the highest potency for the CALCRL-RAMP2 complex. The protein is Pro-adrenomedullin (ADM) of Bos taurus (Bovine).